A 520-amino-acid chain; its full sequence is Cytochrome P450 monooxygenase oblB (520 aa).

Helical transmembrane passes span 17-37 (VAVI…RLFL), 229-249 (LFMG…SILA), and 320-340 (IGTG…HIVV). Residue Cys-462 participates in heme binding.

It belongs to the cytochrome P450 family. It depends on heme as a cofactor.

It localises to the membrane. It participates in secondary metabolite biosynthesis; terpenoid biosynthesis. Functionally, cytochrome P450 monooxygenase; part of the gene cluster that mediates the biosynthesis of the sesterterpenes ophiobolins, fungal phytotoxins with potential anti-cancer activities. The first step of the pathway is performed by the sesterterpene synthase oblA that possesses both prenyl transferase and terpene cyclase activity, converting isopentenyl diphosphate and dimethylallyl diphosphate into geranylfarnesyl diphosphate (GFPP) and further converting GFPP into ophiobolin F, respectively. Other sesterterpenoids (C(25) terpenoids) are found as minor products of oblA. It is expected that ophiobolin F is then oxidized to ophiobolin A via ophiobolin C and ophiobolin B intermediates by the combined action of the cytochrome P450 monooxygenase oblB and the FAD-dependent oxidoreductase oblC. Although oblB catalyzes multistep oxygenations at C5 and C21/C7 in a relatively efficient manner, it is unable to convert ophiobolin F to ophiobolin C and produces instead several unexpected derivatives. This Aspergillus clavatus (strain ATCC 1007 / CBS 513.65 / DSM 816 / NCTC 3887 / NRRL 1 / QM 1276 / 107) protein is Cytochrome P450 monooxygenase oblB.